Reading from the N-terminus, the 515-residue chain is MGRKALISVSDKTGVVEFAKELEKLGFQIISSSGTARVLKENGIDVTEVSDITGFPEIMGGRVKTLHPKIHGGLLAVRDNPEYMKQLEEQGIEPIDIVAINLYPFEQTVRKGADLDEIIENIDIGGPAMVRASAKNHKFVTIIVDPEDYGSVISELKEKGETSLETRRKLALKAFRHTAFYDSVISSVLNEKFGIDEKFPEEFSVPFRKKDTLRYGENPHQEAAVYISPVEYKGLSVAESEVLHGKEMSYNNFLDVEAAVNLVKEFDETACVIVKHNNPCGVAISHTPEKAYREALSRDPKSAFGGIVAFNRSVDIDTAKALTEIFLEVIVAPDFDKDAFDYLTEKKKNLRLVKIKNFDKKAEGPDYRRISGGILVQDRDTQLYNELKVVTDREPTDKEMEDLLFAWKVVKHVKSNSVVIAKNKATVGIGPGQTSRVDSLETAVKKAEEFNLDTEGSVLASEAFFPFRDSVDQAAKYGIKAIIQPGGSIRDNEVIQAANEHGIAMVFTGMRHFKH.

Residues 1–144 (MGRKALISVS…KNHKFVTIIV (144 aa)) enclose the MGS-like domain.

The protein belongs to the PurH family.

The catalysed reaction is (6R)-10-formyltetrahydrofolate + 5-amino-1-(5-phospho-beta-D-ribosyl)imidazole-4-carboxamide = 5-formamido-1-(5-phospho-D-ribosyl)imidazole-4-carboxamide + (6S)-5,6,7,8-tetrahydrofolate. It catalyses the reaction IMP + H2O = 5-formamido-1-(5-phospho-D-ribosyl)imidazole-4-carboxamide. It participates in purine metabolism; IMP biosynthesis via de novo pathway; 5-formamido-1-(5-phospho-D-ribosyl)imidazole-4-carboxamide from 5-amino-1-(5-phospho-D-ribosyl)imidazole-4-carboxamide (10-formyl THF route): step 1/1. Its pathway is purine metabolism; IMP biosynthesis via de novo pathway; IMP from 5-formamido-1-(5-phospho-D-ribosyl)imidazole-4-carboxamide: step 1/1. The protein is Bifunctional purine biosynthesis protein PurH of Persephonella marina (strain DSM 14350 / EX-H1).